The sequence spans 309 residues: Olfactory receptor 8U9 (309 aa).

Residues 1-28 (MTQINCTQVTEFILVGLTDRQELKMPLF) are Extracellular-facing. Asn5 is a glycosylation site (N-linked (GlcNAc...) asparagine). Residues 29–49 (VLFLSIYLFTVVGNLGLILLI) form a helical membrane-spanning segment. The Cytoplasmic segment spans residues 50–56 (RTDEKLN). The chain crosses the membrane as a helical span at residues 57 to 77 (TPMYFFLSNLAFVDFCYSSVI). Residues 78-97 (TPKMLGNFLYKQNSISFNAC) lie on the Extracellular side of the membrane. A disulfide bridge links Cys97 with Cys179. The helical transmembrane segment at 98–118 (AAQLGCFLAFMTAECLLLASM) threads the bilayer. Residues 119-143 (AYDRYVAICNPLMYMVVMSPGICIQ) are Cytoplasmic-facing. Residues 144–164 (LVAAPHSYSILVALFHTILTF) traverse the membrane as a helical segment. Topologically, residues 165–204 (RLSYCHSNIVNHFYCDDMPLLRLTCSDTRFKQLWIFACAG) are extracellular. Residues 205–225 (IMFISSLLIVFVSYMFIISAI) traverse the membrane as a helical segment. Topologically, residues 226-239 (LRMHSAEGRQKAFS) are cytoplasmic. The chain crosses the membrane as a helical span at residues 240–260 (TCGSHMLAVTIFYGTLIFMYL). The Extracellular portion of the chain corresponds to 261-272 (QPSSSHALDTDK). The helical transmembrane segment at 273–293 (MASVFYTVIIPMLNPLIYSLQ) threads the bilayer. Over 294 to 309 (NKEVKEALKKIIINKN) the chain is Cytoplasmic.

It belongs to the G-protein coupled receptor 1 family.

Its subcellular location is the cell membrane. Functionally, odorant receptor. The sequence is that of Olfactory receptor 8U9 (OR8U9) from Homo sapiens (Human).